The following is an 80-amino-acid chain: Exodeoxyribonuclease 7 small subunit (80 aa).

This sequence belongs to the XseB family. Heterooligomer composed of large and small subunits.

It is found in the cytoplasm. The enzyme catalyses Exonucleolytic cleavage in either 5'- to 3'- or 3'- to 5'-direction to yield nucleoside 5'-phosphates.. Functionally, bidirectionally degrades single-stranded DNA into large acid-insoluble oligonucleotides, which are then degraded further into small acid-soluble oligonucleotides. The protein is Exodeoxyribonuclease 7 small subunit of Klebsiella pneumoniae (strain 342).